The sequence spans 189 residues: Adenylate kinase (189 aa).

Position 12-17 (12-17) interacts with ATP; the sequence is GSGKTT. The tract at residues 33 to 62 is NMP; the sequence is STGDLLRAEVASGSELGKLIDGFISKGNLV. AMP contacts are provided by residues T34, R39, 60–62, 87–90, and Q94; these read NLV and GYPR. An LID region spans residues 129 to 135; the sequence is GRARGAD. R130 is a binding site for ATP. 2 residues coordinate AMP: R132 and R144. Position 172 (R172) interacts with ATP.

Belongs to the adenylate kinase family. Monomer.

Its subcellular location is the cytoplasm. The enzyme catalyses AMP + ATP = 2 ADP. It functions in the pathway purine metabolism; AMP biosynthesis via salvage pathway; AMP from ADP: step 1/1. In terms of biological role, catalyzes the reversible transfer of the terminal phosphate group between ATP and AMP. Plays an important role in cellular energy homeostasis and in adenine nucleotide metabolism. The polypeptide is Adenylate kinase (Campylobacter concisus (strain 13826)).